The chain runs to 114 residues: MEKAEVLEDEYQHLFLKPLLNASTLLITFQGEAEALTVSINEQGEMKKVSPPQTSNLTFYGNQTEIIDLLHGDISLQHLIQSGSLKVKGSFRALLKLEAILWLTNGFFQRILKN.

Residues 21-101 enclose the SCP2 domain; it reads NASTLLITFQ…RALLKLEAIL (81 aa).

The chain is SCP2 domain-containing protein YusD (yusD) from Bacillus subtilis (strain 168).